The following is a 750-amino-acid chain: Photosystem I P700 chlorophyll a apoprotein A1 (750 aa).

The next 8 helical transmembrane spans lie at 70 to 93, 156 to 179, 195 to 219, 291 to 309, 346 to 369, 385 to 411, 433 to 455, and 531 to 549; these read VFSA…FHGA, LYCT…FHYH, LNHH…HVSL, IAHH…GHMY, WHAQ…HHMY, LSLF…IFMV, AIIS…LYIH, and FLVH…LILL. Residues Cys-573 and Cys-582 each contribute to the [4Fe-4S] cluster site. The next 2 membrane-spanning stretches (helical) occupy residues 589–610 and 664–686; these read HVFL…HFSW and LSAY…MFLF. Position 675 (His-675) interacts with chlorophyll a'. Residues Met-683 and Tyr-691 each contribute to the chlorophyll a site. Position 692 (Trp-692) interacts with phylloquinone. The chain crosses the membrane as a helical span at residues 724 to 744; sequence AVGVTHYLLGGIATTWAFFLA.

The protein belongs to the PsaA/PsaB family. The PsaA/B heterodimer binds the P700 chlorophyll special pair and subsequent electron acceptors. PSI consists of a core antenna complex that captures photons, and an electron transfer chain that converts photonic excitation into a charge separation. The eukaryotic PSI reaction center is composed of at least 11 subunits. Requires P700 is a chlorophyll a/chlorophyll a' dimer, A0 is one or more chlorophyll a, A1 is one or both phylloquinones and FX is a shared 4Fe-4S iron-sulfur center. as cofactor.

The protein resides in the plastid. It localises to the chloroplast thylakoid membrane. It catalyses the reaction reduced [plastocyanin] + hnu + oxidized [2Fe-2S]-[ferredoxin] = oxidized [plastocyanin] + reduced [2Fe-2S]-[ferredoxin]. In terms of biological role, psaA and PsaB bind P700, the primary electron donor of photosystem I (PSI), as well as the electron acceptors A0, A1 and FX. PSI is a plastocyanin-ferredoxin oxidoreductase, converting photonic excitation into a charge separation, which transfers an electron from the donor P700 chlorophyll pair to the spectroscopically characterized acceptors A0, A1, FX, FA and FB in turn. Oxidized P700 is reduced on the lumenal side of the thylakoid membrane by plastocyanin. The chain is Photosystem I P700 chlorophyll a apoprotein A1 from Crucihimalaya wallichii (Rock-cress).